The sequence spans 734 residues: Photosystem I P700 chlorophyll a apoprotein A2 (734 aa).

Helical transmembrane passes span 46–69, 135–158, 175–199, 273–291, 330–353, 369–395, 417–439, and 517–535; these read IFAS…FHVA, LYTG…LHLQ, LNHH…HVAI, IAHH…GHMY, LHFQ…QHMY, AALY…IFFI, AIIS…LYVH, and FLVH…LILV. [4Fe-4S] cluster is bound by residues Cys559 and Cys568. Helical transmembrane passes span 575–596 and 643–665; these read AFYL…YWHW and LSVW…MFLI. Positions 654, 662, and 670 each coordinate chlorophyll a. Trp671 lines the phylloquinone pocket. A helical membrane pass occupies residues 707–727; that stretch reads LVGLAHFSVGYIFTYAAFLIA.

Belongs to the PsaA/PsaB family. As to quaternary structure, the PsaA/B heterodimer binds the P700 chlorophyll special pair and subsequent electron acceptors. PSI consists of a core antenna complex that captures photons, and an electron transfer chain that converts photonic excitation into a charge separation. The eukaryotic PSI reaction center is composed of at least 11 subunits. The cofactor is P700 is a chlorophyll a/chlorophyll a' dimer, A0 is one or more chlorophyll a, A1 is one or both phylloquinones and FX is a shared 4Fe-4S iron-sulfur center..

Its subcellular location is the plastid. It localises to the chloroplast thylakoid membrane. It carries out the reaction reduced [plastocyanin] + hnu + oxidized [2Fe-2S]-[ferredoxin] = oxidized [plastocyanin] + reduced [2Fe-2S]-[ferredoxin]. In terms of biological role, psaA and PsaB bind P700, the primary electron donor of photosystem I (PSI), as well as the electron acceptors A0, A1 and FX. PSI is a plastocyanin-ferredoxin oxidoreductase, converting photonic excitation into a charge separation, which transfers an electron from the donor P700 chlorophyll pair to the spectroscopically characterized acceptors A0, A1, FX, FA and FB in turn. Oxidized P700 is reduced on the lumenal side of the thylakoid membrane by plastocyanin. This is Photosystem I P700 chlorophyll a apoprotein A2 from Citrus sinensis (Sweet orange).